The following is a 121-amino-acid chain: uncharacterized protein (121 aa).

This is an uncharacterized protein from Escherichia coli (strain K12).